Consider the following 116-residue polypeptide: Ribosome-binding factor A (116 aa).

The protein belongs to the RbfA family. In terms of assembly, monomer. Binds 30S ribosomal subunits, but not 50S ribosomal subunits or 70S ribosomes.

The protein localises to the cytoplasm. Its function is as follows. One of several proteins that assist in the late maturation steps of the functional core of the 30S ribosomal subunit. Associates with free 30S ribosomal subunits (but not with 30S subunits that are part of 70S ribosomes or polysomes). Required for efficient processing of 16S rRNA. May interact with the 5'-terminal helix region of 16S rRNA. In Streptococcus equi subsp. zooepidemicus (strain H70), this protein is Ribosome-binding factor A.